Reading from the N-terminus, the 622-residue chain is Chaperone protein HscA homolog (622 aa).

The protein belongs to the heat shock protein 70 family.

Its function is as follows. Chaperone involved in the maturation of iron-sulfur cluster-containing proteins. Has a low intrinsic ATPase activity which is markedly stimulated by HscB. The protein is Chaperone protein HscA homolog of Delftia acidovorans (strain DSM 14801 / SPH-1).